Here is a 243-residue protein sequence, read N- to C-terminus: Ubiquinone/menaquinone biosynthesis C-methyltransferase UbiE (243 aa).

S-adenosyl-L-methionine is bound by residues Thr69, Asp90, and 116 to 117 (DA).

Belongs to the class I-like SAM-binding methyltransferase superfamily. MenG/UbiE family.

It catalyses the reaction a 2-demethylmenaquinol + S-adenosyl-L-methionine = a menaquinol + S-adenosyl-L-homocysteine + H(+). The catalysed reaction is a 2-methoxy-6-(all-trans-polyprenyl)benzene-1,4-diol + S-adenosyl-L-methionine = a 5-methoxy-2-methyl-3-(all-trans-polyprenyl)benzene-1,4-diol + S-adenosyl-L-homocysteine + H(+). Its pathway is quinol/quinone metabolism; menaquinone biosynthesis; menaquinol from 1,4-dihydroxy-2-naphthoate: step 2/2. The protein operates within cofactor biosynthesis; ubiquinone biosynthesis. Methyltransferase required for the conversion of demethylmenaquinol (DMKH2) to menaquinol (MKH2) and the conversion of 2-polyprenyl-6-methoxy-1,4-benzoquinol (DDMQH2) to 2-polyprenyl-3-methyl-6-methoxy-1,4-benzoquinol (DMQH2). The polypeptide is Ubiquinone/menaquinone biosynthesis C-methyltransferase UbiE (Burkholderia multivorans (strain ATCC 17616 / 249)).